The chain runs to 476 residues: Bifunctional protein HldE (476 aa).

The segment at 1-318 (MKPILPDYNS…AEAVHGSQDT (318 aa)) is ribokinase. 195–198 (NMKE) is a binding site for ATP. Asp264 is an active-site residue. The interval 344 to 476 (MTNGCFDILH…IINAIKGGKG (133 aa)) is cytidylyltransferase.

This sequence in the N-terminal section; belongs to the carbohydrate kinase PfkB family. The protein in the C-terminal section; belongs to the cytidylyltransferase family. Homodimer.

The catalysed reaction is D-glycero-beta-D-manno-heptose 7-phosphate + ATP = D-glycero-beta-D-manno-heptose 1,7-bisphosphate + ADP + H(+). It catalyses the reaction D-glycero-beta-D-manno-heptose 1-phosphate + ATP + H(+) = ADP-D-glycero-beta-D-manno-heptose + diphosphate. The protein operates within nucleotide-sugar biosynthesis; ADP-L-glycero-beta-D-manno-heptose biosynthesis; ADP-L-glycero-beta-D-manno-heptose from D-glycero-beta-D-manno-heptose 7-phosphate: step 1/4. Its pathway is nucleotide-sugar biosynthesis; ADP-L-glycero-beta-D-manno-heptose biosynthesis; ADP-L-glycero-beta-D-manno-heptose from D-glycero-beta-D-manno-heptose 7-phosphate: step 3/4. It participates in bacterial outer membrane biogenesis; LPS core biosynthesis. Catalyzes the phosphorylation of D-glycero-D-manno-heptose 7-phosphate at the C-1 position to selectively form D-glycero-beta-D-manno-heptose-1,7-bisphosphate. Functionally, catalyzes the ADP transfer from ATP to D-glycero-beta-D-manno-heptose 1-phosphate, yielding ADP-D-glycero-beta-D-manno-heptose. The polypeptide is Bifunctional protein HldE (Vibrio parahaemolyticus serotype O3:K6 (strain RIMD 2210633)).